Here is a 2238-residue protein sequence, read N- to C-terminus: RNA-directed RNA polymerase L (2238 aa).

The interval 26–284 (ITLVTCQNDA…THHSEHPVDC (259 aa)) is endonuclease. Glu51, Asp89, and Glu102 together coordinate Mn(2+). Lys115 is a catalytic residue. Residues 1188 to 1387 (TDMKMCVNLG…FISTKFNKFV (200 aa)) enclose the RdRp catalytic domain. Asp1346 is a Mg(2+) binding site.

It belongs to the Bunyavirales RNA polymerase family. In terms of assembly, homomultimer; the oligomeric structure is essential for the polymerase activity. Interacts with nucleoprotein N. Interacts with protein Z; this interaction inhibits viral transcription and replication, Z partially blocks the product exit tunnel for the releasing nascent RNA product. Requires Mn(2+) as cofactor. The cofactor is Mg(2+).

The protein localises to the virion. The protein resides in the host cytoplasm. It carries out the reaction RNA(n) + a ribonucleoside 5'-triphosphate = RNA(n+1) + diphosphate. Its function is as follows. RNA-dependent RNA polymerase, which is responsible for the replication and transcription of the viral RNA genome using antigenomic RNA as an intermediate. During transcription, synthesizes subgenomic RNAs and assures their capping by a cap-snatching mechanism, which involves the endonuclease activity cleaving the host capped pre-mRNAs. These short capped RNAs are then used as primers for viral transcription. The 3'-end of subgenomic mRNAs molecules are heterogeneous and not polyadenylated. The replicase function is to direct synthesis of antigenomic and genomic RNA which are encapsidated and non capped. As a consequence of the use of the same enzyme for both transcription and replication, these mechanisms need to be well coordinated. These processes may be regulated by proteins N and Z in a dose-dependent manner. Z protein inhibits the viral polymerase L und thus the viral transcription and RNA synthesis. The protein is RNA-directed RNA polymerase L of Calomys callosus (Large vesper mouse).